The following is an 88-amino-acid chain: Sec-independent protein translocase protein TatA (88 aa).

Residues 1-21 traverse the membrane as a helical segment; it reads MGSIGWAQLLIIAVIVVLLFG. Residues 41–88 form a disordered region; it reads KAMGDDSQTPPTNVDKTSNDADFAKSITEKQQPVAKAEESKSHEKEQG. Residues 46–56 are compositionally biased toward polar residues; the sequence is DSQTPPTNVDK. Basic and acidic residues predominate over residues 76 to 88; sequence KAEESKSHEKEQG.

This sequence belongs to the TatA/E family. As to quaternary structure, the Tat system comprises two distinct complexes: a TatABC complex, containing multiple copies of TatA, TatB and TatC subunits, and a separate TatA complex, containing only TatA subunits. Substrates initially bind to the TatABC complex, which probably triggers association of the separate TatA complex to form the active translocon.

It localises to the cell inner membrane. Functionally, part of the twin-arginine translocation (Tat) system that transports large folded proteins containing a characteristic twin-arginine motif in their signal peptide across membranes. TatA could form the protein-conducting channel of the Tat system. The polypeptide is Sec-independent protein translocase protein TatA (Yersinia pestis).